A 796-amino-acid chain; its full sequence is Kinesin-like protein KIF3C (796 aa).

Positions 10–367 (ALKVVARCRP…LRFANRAKNI (358 aa)) constitute a Kinesin motor domain. 97–104 (GQTGTGKT) is an ATP binding site. 3 disordered regions span residues 251–292 (ERQN…PKEA), 397–421 (EKKGMLGKRPRRKSSRRKKAVSAPA), and 754–796 (PSTS…VDHD). A compositionally biased stretch (gly residues) spans 270–284 (AGGGGGGGGTSGSGS). Positions 378 to 632 (KDTLLREFQE…NEQTRELKLK (255 aa)) form a coiled coil. Residues 401–416 (MLGKRPRRKSSRRKKA) show a composition bias toward basic residues. The tract at residues 633 to 793 (YLIIENFIPP…SAPLHPATVV (161 aa)) is globular.

It belongs to the TRAFAC class myosin-kinesin ATPase superfamily. Kinesin family. Kinesin II subfamily. In terms of assembly, heterodimer of KIF3A and KIF3C.

The protein localises to the cytoplasm. It is found in the cytoskeleton. Its function is as follows. Microtubule-based anterograde translocator for membranous organelles. The polypeptide is Kinesin-like protein KIF3C (Kif3c) (Rattus norvegicus (Rat)).